The following is a 199-amino-acid chain: Prolactin (199 aa).

Cys4 and Cys11 are joined by a disulfide. A phosphoserine mark is found at Ser26, Ser34, and Ser90. Cystine bridges form between Cys58–Cys174 and Cys191–Cys199.

Belongs to the somatotropin/prolactin family. As to quaternary structure, interacts with PRLR.

The protein resides in the secreted. Its function is as follows. Prolactin acts primarily on the mammary gland by promoting lactation. In Balaenoptera borealis (Sei whale), this protein is Prolactin (PRL).